Reading from the N-terminus, the 137-residue chain is DNA-binding protein H-NS (137 aa).

The DNA-binding element occupies 112–117 (QGRTPA).

The protein belongs to the histone-like protein H-NS family. As to quaternary structure, homodimer that oligomerizes on DNA into higher-order complexes that form bridges between disparate regions of DNA compacting it. Interacts with Hha, YdgT and StpA.

The protein localises to the cytoplasm. The protein resides in the nucleoid. A DNA-binding protein implicated in transcriptional repression and chromosome organization and compaction. Binds nucleation sites in AT-rich DNA and bridges them, forming higher-order nucleoprotein complexes and condensing the chromosome. As many horizontally transferred genes are AT-rich, it plays a central role in silencing foreign genes. A subset of genes are repressed by H-NS in association with other proteins. This Salmonella paratyphi A (strain ATCC 9150 / SARB42) protein is DNA-binding protein H-NS (hns).